Reading from the N-terminus, the 357-residue chain is tRNA-specific 2-thiouridylase MnmA (357 aa).

ATP is bound by residues 7 to 14 (GLSGGVDS) and methionine 33. An interaction with target base in tRNA region spans residues 94 to 96 (NPD). Cysteine 99 serves as the catalytic Nucleophile. The cysteines at positions 99 and 195 are disulfide-linked. Residue glycine 123 coordinates ATP. An interaction with tRNA region spans residues 145–147 (KDQ). The Cysteine persulfide intermediate role is filled by cysteine 195. An interaction with tRNA region spans residues 303-304 (RY).

It belongs to the MnmA/TRMU family.

The protein localises to the cytoplasm. The enzyme catalyses S-sulfanyl-L-cysteinyl-[protein] + uridine(34) in tRNA + AH2 + ATP = 2-thiouridine(34) in tRNA + L-cysteinyl-[protein] + A + AMP + diphosphate + H(+). Functionally, catalyzes the 2-thiolation of uridine at the wobble position (U34) of tRNA, leading to the formation of s(2)U34. This is tRNA-specific 2-thiouridylase MnmA from Akkermansia muciniphila (strain ATCC BAA-835 / DSM 22959 / JCM 33894 / BCRC 81048 / CCUG 64013 / CIP 107961 / Muc).